A 101-amino-acid chain; its full sequence is Protein RALF-like 14 (101 aa).

The first 21 residues, 1–21 (MKLLIFAVIISVVLFPVLVSS), serve as a signal peptide directing secretion. A propeptide spans 22–56 (RTIKCDQLSGKCINGEEKEIMNMRLGLDVSSRRIL) (removed in mature form). Cysteine 90 and cysteine 96 are joined by a disulfide.

Belongs to the plant rapid alkalinization factor (RALF) family. In terms of processing, proteolytically cleaved, probably by S1P, a subtilisin-like serine protease (subtilase).

The protein localises to the secreted. Cell signaling peptide that may regulate plant stress, growth, and development. Mediates a rapid alkalinization of extracellular space by mediating a transient increase in the cytoplasmic Ca(2+) concentration leading to a calcium-dependent signaling events through a cell surface receptor and a concomitant activation of some intracellular mitogen-activated protein kinases. The chain is Protein RALF-like 14 (RALFL14) from Arabidopsis thaliana (Mouse-ear cress).